Reading from the N-terminus, the 313-residue chain is Competence protein ComGA (313 aa).

Position 138 to 145 (138 to 145) interacts with ATP; it reads GPVGSGKT.

Belongs to the GSP E family.

It localises to the cell membrane. Its function is as follows. Required for uptake of DNA by competent cells. May be involved in assembly of a complex forming a transformation pilus at the surface of competent cells. The sequence is that of Competence protein ComGA from Streptococcus pneumoniae (strain ATCC BAA-255 / R6).